The following is a 348-amino-acid chain: Isopentenyl-diphosphate delta-isomerase (348 aa).

Position 14–15 (14–15 (RK)) interacts with substrate. Residues S72, 73 to 75 (SMT), S103, and N131 contribute to the FMN site. Substrate is bound at residue 103 to 105 (SQR). Q166 is a substrate binding site. Mg(2+) is bound at residue E167. FMN is bound by residues K198, T228, 278-280 (GIR), and 299-300 (AR).

Belongs to the IPP isomerase type 2 family. In terms of assembly, homooctamer. Dimer of tetramers. FMN is required as a cofactor. Requires NADPH as cofactor. It depends on Mg(2+) as a cofactor.

It localises to the cytoplasm. It carries out the reaction isopentenyl diphosphate = dimethylallyl diphosphate. In terms of biological role, involved in the biosynthesis of isoprenoids. Catalyzes the 1,3-allylic rearrangement of the homoallylic substrate isopentenyl (IPP) to its allylic isomer, dimethylallyl diphosphate (DMAPP). The sequence is that of Isopentenyl-diphosphate delta-isomerase from Synechococcus sp. (strain ATCC 27144 / PCC 6301 / SAUG 1402/1) (Anacystis nidulans).